The following is a 482-amino-acid chain: MKFIIKLFPEITIKSQSVRLRFIKILTGNIRNVLKHYDETLAVVRHWDNIEVRAKDENQRLAIRDALTRIPGIHHILEVEDVPFTDMHDIFEKALAQYREQLEGKTFCVRVKRRGKHEFSSIEVERYVGGGLNQHIESARVKLTNPDVTVHLEVEDDRLLLIKGRYEGIGGFPIGTQEDVLSLISGGFDSGVSSYMLMRRGCRVHYCFFNLGGAAHEIGVRQVAHYLWNRFGSSHRVRFVAINFEPVVGEILEKVDDGQMGVVLKRMMVRAASKVAERYGVQALVTGEALGQVSSQTLTNLRLIDNVSDTLILRPLISYDKGHIINLARQIGTEDFARTMPEYCGVISKSPTVKAIKAKIEAEEENFDFSILDKVVEEANNVDIREIAQQTQQEVVEVETVSGFGPNDVILDIRSVDEQDDKPLKVEGVDVVSLPFYKLSTKFGDLDQSKTWLLWCERGVMSRLQALYLREQGFANVKVYRP.

One can recognise a THUMP domain in the interval 61 to 165 (LAIRDALTRI…DDRLLLIKGR (105 aa)). ATP-binding positions include 183–184 (LI), Lys265, Gly287, and Gln296. The cysteines at positions 344 and 456 are disulfide-linked. Residues 404-482 (FGPNDVILDI…GFANVKVYRP (79 aa)) enclose the Rhodanese domain. The Cysteine persulfide intermediate role is filled by Cys456.

This sequence belongs to the ThiI family.

It localises to the cytoplasm. The enzyme catalyses [ThiI sulfur-carrier protein]-S-sulfanyl-L-cysteine + a uridine in tRNA + 2 reduced [2Fe-2S]-[ferredoxin] + ATP + H(+) = [ThiI sulfur-carrier protein]-L-cysteine + a 4-thiouridine in tRNA + 2 oxidized [2Fe-2S]-[ferredoxin] + AMP + diphosphate. The catalysed reaction is [ThiS sulfur-carrier protein]-C-terminal Gly-Gly-AMP + S-sulfanyl-L-cysteinyl-[cysteine desulfurase] + AH2 = [ThiS sulfur-carrier protein]-C-terminal-Gly-aminoethanethioate + L-cysteinyl-[cysteine desulfurase] + A + AMP + 2 H(+). Its pathway is cofactor biosynthesis; thiamine diphosphate biosynthesis. Its function is as follows. Catalyzes the ATP-dependent transfer of a sulfur to tRNA to produce 4-thiouridine in position 8 of tRNAs, which functions as a near-UV photosensor. Also catalyzes the transfer of sulfur to the sulfur carrier protein ThiS, forming ThiS-thiocarboxylate. This is a step in the synthesis of thiazole, in the thiamine biosynthesis pathway. The sulfur is donated as persulfide by IscS. The protein is tRNA sulfurtransferase of Salmonella choleraesuis (strain SC-B67).